Reading from the N-terminus, the 179-residue chain is NADH:FAD oxidoreductase (179 aa).

48–51 (TCSA) is a binding site for FAD. 54-57 (SVCD) provides a ligand contact to NAD(+). FAD-binding positions include 65 to 71 (CINRKSY), Ala99, 104 to 109 (VPMEER), and Ser144. NAD(+) contacts are provided by residues His145 and 166–169 (YHRR). Residue Tyr166 coordinates FAD.

The protein belongs to the non-flavoprotein flavin reductase family. In terms of assembly, homodimer. The chlorophenol-4-monooxygenase is composed of an oxygenase component TftD and a reductase component TftC.

The enzyme catalyses FADH2 + NAD(+) = FAD + NADH + 2 H(+). It participates in xenobiotic degradation. Its function is as follows. Reductase component of a two-component system that degrades 2,4,5-trichlorophenol. TftC provides the FADH(2) required by TftD. TftD oxidizes 2,4,5-trichlorophenol (2,4,5-TCP) to 2,5-dichloro-p-benzoquinone, which is chemically reduced to 2,5-dichloro-p-hydroquinone (2,5-DiCHQ). Then, TftD oxidizes the latter to 5-chloro-2-hydroxy-p-benzoquinone. The protein is NADH:FAD oxidoreductase (tftC) of Burkholderia cepacia (Pseudomonas cepacia).